A 279-amino-acid chain; its full sequence is Putative ABC transporter ATP-binding protein CA_C1368 (279 aa).

The ABC transporter domain occupies 4–239 (ISINNVDYIY…KKVLRNINLR (236 aa)). 37–44 (GPNGAGKS) is an ATP binding site.

It belongs to the ABC transporter superfamily.

Its subcellular location is the cell membrane. Its function is as follows. Probably part of an ABC transporter complex. Responsible for energy coupling to the transport system. This is Putative ABC transporter ATP-binding protein CA_C1368 from Clostridium acetobutylicum (strain ATCC 824 / DSM 792 / JCM 1419 / IAM 19013 / LMG 5710 / NBRC 13948 / NRRL B-527 / VKM B-1787 / 2291 / W).